A 523-amino-acid chain; its full sequence is Synaptotagmin-10 (523 aa).

The Vesicular segment spans residues 1–55 (MSFHKEDGVNSLCQKALHIVTELCFAGQVEWEKCSGIFPRDRGSQGGSSTDISVS). The interval 13–35 (CQKALHIVTELCFAGQVEWEKCS) is cysteine motif. The helical transmembrane segment at 56-76 (LLAVVVSFCGLALLVVSLFVF) threads the bilayer. Over 77–523 (WKLCWPCWKS…CPSPKPPSTP (447 aa)) the chain is Cytoplasmic. At Thr-136 the chain carries Phosphothreonine. C2 domains follow at residues 231 to 352 (ICGK…TVWK) and 363 to 496 (DLGE…THWH). Residues Asp-262, Asp-268, Asp-320, Phe-321, Asp-322, Ser-325, Asp-328, Asp-394, Asp-400, Asp-454, and Asp-456 each contribute to the Ca(2+) site.

It belongs to the synaptotagmin family. As to quaternary structure, homodimer; disulfide-linked via the cysteine motif. Can also form heterodimers with SYT3, SYT6, SYT7 and SYT9. Ca(2+) serves as cofactor. In terms of tissue distribution, expressed only in pancreas, lung and kidney.

It localises to the cytoplasmic vesicle. It is found in the secretory vesicle membrane. In terms of biological role, ca(2+) sensor specifically required for the Ca(2+)-dependent exocytosis of secretory vesicles containing IGF1 in neurons of the olfactory bulb. Exocytosis of IGF1 is required for sensory perception of smell. Not involved in Ca(2+)-dependent synaptic vesicle exocytosis. Acts through Ca(2+) and phospholipid binding to the C2 domain: Ca(2+) induces binding of the C2-domains to phospholipid membranes and to assembled SNARE-complexes; both actions contribute to triggering exocytosis. The chain is Synaptotagmin-10 (SYT10) from Homo sapiens (Human).